Consider the following 311-residue polypeptide: Lipoyl synthase (311 aa).

[4Fe-4S] cluster contacts are provided by Cys-47, Cys-52, Cys-58, Cys-73, Cys-77, Cys-80, and Ser-287. Residues 59–276 form the Radical SAM core domain; that stretch reads WTKKHATVMI…AQIARAKGFL (218 aa).

The protein belongs to the radical SAM superfamily. Lipoyl synthase family. Requires [4Fe-4S] cluster as cofactor.

Its subcellular location is the cytoplasm. The enzyme catalyses [[Fe-S] cluster scaffold protein carrying a second [4Fe-4S](2+) cluster] + N(6)-octanoyl-L-lysyl-[protein] + 2 oxidized [2Fe-2S]-[ferredoxin] + 2 S-adenosyl-L-methionine + 4 H(+) = [[Fe-S] cluster scaffold protein] + N(6)-[(R)-dihydrolipoyl]-L-lysyl-[protein] + 4 Fe(3+) + 2 hydrogen sulfide + 2 5'-deoxyadenosine + 2 L-methionine + 2 reduced [2Fe-2S]-[ferredoxin]. Its pathway is protein modification; protein lipoylation via endogenous pathway; protein N(6)-(lipoyl)lysine from octanoyl-[acyl-carrier-protein]: step 2/2. Catalyzes the radical-mediated insertion of two sulfur atoms into the C-6 and C-8 positions of the octanoyl moiety bound to the lipoyl domains of lipoate-dependent enzymes, thereby converting the octanoylated domains into lipoylated derivatives. In Sphingopyxis alaskensis (strain DSM 13593 / LMG 18877 / RB2256) (Sphingomonas alaskensis), this protein is Lipoyl synthase.